The following is a 65-amino-acid chain: Precursor peptide TigB (65 aa).

TIGSVS motif repeat units follow at residues 16–21 (TIGSVS), 23–28 (TIGSVS), 33–38 (TIGSVS), 40–45 (TIGSVS), 47–52 (TIGSVS), and 54–59 (TIGSVS). Methylcyclopropylglycine occurs at positions 17, 24, 34, 41, 48, and 55.

Is subject to maturation by TigE, that catalyzes the formation of methylcyclopropylglycine (mCPG) residues from isoleucine residues residing in the repeating TIGSVS motifs.

Precursor peptide which undergoes post-translational modifications by tailoring enzymes, leading to the mature natural product. This is Precursor peptide TigB from Paramaledivibacter caminithermalis (strain DSM 15212 / CIP 107654 / DViRD3) (Clostridium caminithermale).